The following is a 239-amino-acid chain: Fatty acid metabolism regulator protein (239 aa).

The HTH gntR-type domain occupies 6-74 (QSPAGFAEEY…HGKPTKVNNF (69 aa)). A DNA-binding region (H-T-H motif) is located at residues 34–53 (ERELSELIGVTRTTLREVLQ).

As to quaternary structure, homodimer.

The protein resides in the cytoplasm. Multifunctional regulator of fatty acid metabolism. Represses transcription of at least eight genes required for fatty acid transport and beta-oxidation including fadA, fadB, fadD, fadL and fadE. Activates transcription of at least three genes required for unsaturated fatty acid biosynthesis: fabA, fabB and iclR, the gene encoding the transcriptional regulator of the aceBAK operon encoding the glyoxylate shunt enzymes. Binding of FadR is specifically inhibited by long chain fatty acyl-CoA compounds. This is Fatty acid metabolism regulator protein from Salmonella typhimurium (strain LT2 / SGSC1412 / ATCC 700720).